We begin with the raw amino-acid sequence, 388 residues long: Phosphopentomutase (388 aa).

6 residues coordinate Mn(2+): D10, D282, H287, D323, H324, and H335.

It belongs to the phosphopentomutase family. The cofactor is Mn(2+).

Its subcellular location is the cytoplasm. The enzyme catalyses 2-deoxy-alpha-D-ribose 1-phosphate = 2-deoxy-D-ribose 5-phosphate. It catalyses the reaction alpha-D-ribose 1-phosphate = D-ribose 5-phosphate. Its pathway is carbohydrate degradation; 2-deoxy-D-ribose 1-phosphate degradation; D-glyceraldehyde 3-phosphate and acetaldehyde from 2-deoxy-alpha-D-ribose 1-phosphate: step 1/2. In terms of biological role, isomerase that catalyzes the conversion of deoxy-ribose 1-phosphate (dRib-1-P) and ribose 1-phosphate (Rib-1-P) to deoxy-ribose 5-phosphate (dRib-5-P) and ribose 5-phosphate (Rib-5-P), respectively. This is Phosphopentomutase from Acetivibrio thermocellus (strain ATCC 27405 / DSM 1237 / JCM 9322 / NBRC 103400 / NCIMB 10682 / NRRL B-4536 / VPI 7372) (Clostridium thermocellum).